We begin with the raw amino-acid sequence, 446 residues long: Protein dyf-7 (446 aa).

An N-terminal signal peptide occupies residues 1–24 (MNQLWRASCLQVLITFLLIHQNKA). Residues 35-295 (DCIADSFTVV…KTCYKKVSDS (261 aa)) enclose the ZP domain. A disulfide bridge links Cys211 with Cys273. The chain crosses the membrane as a helical span at residues 377 to 397 (IPLIIMGSLASLLLFSAGAAI).

As to quaternary structure, monomer under reducing conditions. Homodimer under non-reducing conditions. May also form higher order oligomers. Post-translationally, proteolytically cleaved and secreted in vitro. As to expression, in the embryo, expressed in the excretory cell and, during dendrite formation, in the non-neuronal cells surrounding the sensory neurons, including hypodermal cells.

It is found in the cell membrane. The protein localises to the cell projection. The protein resides in the dendrite. Its subcellular location is the secreted. Functionally, required for permeability of amphid and phasmid neurons to external dyes, chemotaxis to ammonium chloride, avoidance of high osmotic stimuli, male mating and dauer formation. Along with dex-1, enables neurite growth and maintenance by anchoring amphid dendritic tips during neuron cell body migration in embryonic and larval development. The sequence is that of Protein dyf-7 from Caenorhabditis elegans.